A 448-amino-acid chain; its full sequence is Protein king tubby (448 aa).

The disordered stretch occupies residues 103 to 195; the sequence is HELEDEESSP…NGTGGESEGD (93 aa). Residues 118 to 133 are compositionally biased toward low complexity; it reads QHQQSASHSANSTQSQ. Residue Ser141 is modified to Phosphoserine. Residues 182–191 are compositionally biased toward gly residues; it reads NGTGNGTGGE.

The protein belongs to the TUB family.

The protein localises to the cytoplasm. The protein resides in the nucleus. It localises to the cell projection. It is found in the cilium membrane. Its subcellular location is the rhabdomere. This chain is Protein king tubby, found in Drosophila erecta (Fruit fly).